The sequence spans 208 residues: MKKYWNRRKNRVEDFINKLTSQLSKLFPDAIFIFEDLDKFNMYDKNSNFNRNLDRTNWRKIAKKLEYKSVVLYVNPHYTSKTCPVCGSKMKSQEGQVVKCDKCGIFDRQFVRCYNIFKRGVELAKKLLGGVGVPVAGAEVDDLLSNEPRGELRLVKPNPNVEAKLPVRKSNRRFELQNPKDFVQIFDFPLMVYTVDLNGKYLKIYNCP.

Zn(2+)-binding residues include C83, C86, C100, and C103.

The protein belongs to the transposase 35 family.

The sequence is that of TnpB-like protein MJ0012 from Methanocaldococcus jannaschii (strain ATCC 43067 / DSM 2661 / JAL-1 / JCM 10045 / NBRC 100440) (Methanococcus jannaschii).